A 668-amino-acid chain; its full sequence is Threonine--tRNA ligase (668 aa).

Positions 1–61 (MSDLKIALTH…ADGDQVEPVA (61 aa)) constitute a TGS domain. A catalytic region spans residues 265–564 (DHRKLGRDLD…LVEHYAGAFP (300 aa)). Zn(2+) is bound by residues Cys-358, His-409, and His-541.

It belongs to the class-II aminoacyl-tRNA synthetase family. Homodimer. Zn(2+) is required as a cofactor.

The protein resides in the cytoplasm. The enzyme catalyses tRNA(Thr) + L-threonine + ATP = L-threonyl-tRNA(Thr) + AMP + diphosphate + H(+). In terms of biological role, catalyzes the attachment of threonine to tRNA(Thr) in a two-step reaction: L-threonine is first activated by ATP to form Thr-AMP and then transferred to the acceptor end of tRNA(Thr). Also edits incorrectly charged L-seryl-tRNA(Thr). The chain is Threonine--tRNA ligase from Nocardioides sp. (strain ATCC BAA-499 / JS614).